The chain runs to 229 residues: Demethylmenaquinone methyltransferase (229 aa).

S-adenosyl-L-methionine is bound by residues threonine 57, aspartate 77, and 101–102 (DV).

It belongs to the class I-like SAM-binding methyltransferase superfamily. MenG/UbiE family.

It carries out the reaction a 2-demethylmenaquinol + S-adenosyl-L-methionine = a menaquinol + S-adenosyl-L-homocysteine + H(+). Its pathway is quinol/quinone metabolism; menaquinone biosynthesis; menaquinol from 1,4-dihydroxy-2-naphthoate: step 2/2. Functionally, methyltransferase required for the conversion of demethylmenaquinol (DMKH2) to menaquinol (MKH2). The sequence is that of Demethylmenaquinone methyltransferase from Chlamydia trachomatis serovar A (strain ATCC VR-571B / DSM 19440 / HAR-13).